Consider the following 575-residue polypeptide: E3 ubiquitin-protein ligase IpaH1.4 (575 aa).

The interaction with target proteins stretch occupies residues 1-270 (MIKSTNIQAI…PDYSGPQIFF (270 aa)). LRR repeat units follow at residues 69–90 (LQNQ…PDLP), 91–115 (PQIT…MLKV), 117–130 (HAQF…PALP), 131–150 (ETLE…PFLP), 151–170 (ENLT…PLLP), 171–195 (PELK…KLEG), 197–209 (ALAN…LPEL), and 210–233 (PFSM…VLRL). Residues 271-281 (SMGNSATISAP) form a linker region. Residues 282 to 575 (EHSLADAVTA…LSENGSNHIA (294 aa)) form an E3 ubiquitin-protein ligase catalytic domain region. Residues 284–575 (SLADAVTAWF…LSENGSNHIA (292 aa)) enclose the NEL domain. C368 (glycyl thioester intermediate) is an active-site residue.

It belongs to the LRR-containing bacterial E3 ligase family. Interacts with human RBCK1/HOIL-1 and RNF31/HOIP components of the LUBAC complex. In terms of processing, ubiquitinated in the presence of host E1 ubiquitin-activating enzyme, E2 ubiquitin-conjugating enzyme and ubiquitin.

The protein localises to the secreted. It localises to the host cytoplasm. It catalyses the reaction S-ubiquitinyl-[E2 ubiquitin-conjugating enzyme]-L-cysteine + [acceptor protein]-L-lysine = [E2 ubiquitin-conjugating enzyme]-L-cysteine + N(6)-ubiquitinyl-[acceptor protein]-L-lysine.. Its pathway is protein modification; protein ubiquitination. Its activity is regulated as follows. Exists in an autoinhibited state in the absence of substrate protein, probably due to interactions of the leucine-rich repeat domain with the catalytic domain. Is activated upon binding to a substrate protein. Functionally, E3 ubiquitin-protein ligase effector that inhibits host cell innate immunity during bacterial infection by catalyzing 'Lys-48'-linked polyubiquitination and subsequent degradation of host RNF31/HOIP and RBCK1/HOIL-1. Host RNF31/HOIP is the catalytic component of the LUBAC complex, which conjugates linear ('Met-1'-linked) polyubiquitin chains at the surface of bacteria invading the host cytosol to form the ubiquitin coat surrounding bacteria. The bacterial ubiquitin coat acts as an 'eat-me' signal for xenophagy and promotes NF-kappa-B activation. By promoting degradation of host RNF31/HOIP, IpaH1.4 prevents formation of the bacterial ubiquitin coat and activation of host cell innate immunity. The polypeptide is E3 ubiquitin-protein ligase IpaH1.4 (Shigella flexneri).